Consider the following 40-residue polypeptide: MKVRTSLRSLKQIPGSQVVRRRGKTYVINKKNPRMKARQG.

This sequence belongs to the bacterial ribosomal protein bL36 family.

The chain is Large ribosomal subunit protein bL36B from Kocuria rhizophila (strain ATCC 9341 / DSM 348 / NBRC 103217 / DC2201).